A 711-amino-acid polypeptide reads, in one-letter code: Ent-copalyl diphosphate synthase 1 (711 aa).

Substrate is bound at residue Lys-145. Residues Asp-277 and Asp-279 each contribute to the Mg(2+) site. Positions 277-280 (DIDD) match the DXDD motif motif. A substrate-binding site is contributed by Lys-364.

Belongs to the terpene synthase family. Tpsc subfamily. Mg(2+) is required as a cofactor.

It catalyses the reaction (2E,6E,10E)-geranylgeranyl diphosphate = ent-copalyl diphosphate. It participates in secondary metabolite biosynthesis; terpenoid biosynthesis. Its function is as follows. Involved in the biosynthesis of ent-kaurene diterpenoids natural products such as oridonin, miltiradiene, eriocalyxin B and nezukol, known to exhibit antitumor, anti-inflammatory and antibacterial activities. Catalyzes the conversion of (2E,6E,10E)-geranylgeranyl diphosphate (GGPP) to ent-copalyl diphosphate (ent-CPP). This Isodon japonicus (Scutellaria japonica) protein is Ent-copalyl diphosphate synthase 1.